Reading from the N-terminus, the 483-residue chain is Dual specificity protein phosphatase 10 (483 aa).

A Rhodanese domain is found at 169–286 (PSQGPVIIDC…FKQNHGNLCD (118 aa)). An interaction with MAP kinases region spans residues 200 to 216 (KISRRRLQQGKITVLDL). Positions 322 to 465 (ELTPILPFLF…LLEFEEDLNN (144 aa)) constitute a Tyrosine-protein phosphatase domain. The active-site Phosphocysteine intermediate is the C409.

The protein belongs to the protein-tyrosine phosphatase family. Non-receptor class dual specificity subfamily. Monomer. Interacts with MAPK14.

The protein localises to the cytoplasm. Its subcellular location is the nucleus. It carries out the reaction O-phospho-L-tyrosyl-[protein] + H2O = L-tyrosyl-[protein] + phosphate. The enzyme catalyses O-phospho-L-seryl-[protein] + H2O = L-seryl-[protein] + phosphate. It catalyses the reaction O-phospho-L-threonyl-[protein] + H2O = L-threonyl-[protein] + phosphate. In terms of biological role, protein phosphatase involved in the inactivation of MAP kinases. Has a specificity for the MAPK11/MAPK12/MAPK13/MAPK14 subfamily. It preferably dephosphorylates p38. The sequence is that of Dual specificity protein phosphatase 10 (Dusp10) from Mus musculus (Mouse).